An 82-amino-acid polypeptide reads, in one-letter code: Cytochrome c oxidase-assembly factor cox-23, mitochondrial (82 aa).

The interval 1 to 27 (MAQAGSENKEPWNEETRAKFEGKSRSE) is disordered. Residues 7 to 27 (ENKEPWNEETRAKFEGKSRSE) show a composition bias toward basic and acidic residues. The CHCH domain maps to 29-71 (LDPCQEAAQRSIRCLHRNQGDRTMCSDYFEAYRECKKQWIERR). Short sequence motifs (cx9C motif) lie at residues 32–42 (CQEAAQRSIRC) and 53–63 (CSDYFEAYREC). Disulfide bonds link Cys-32-Cys-63 and Cys-42-Cys-53.

Belongs to the COX23 family.

It is found in the mitochondrion intermembrane space. Functionally, required for the assembly of cytochrome c oxidase. This chain is Cytochrome c oxidase-assembly factor cox-23, mitochondrial (cox-23), found in Neurospora crassa (strain ATCC 24698 / 74-OR23-1A / CBS 708.71 / DSM 1257 / FGSC 987).